Reading from the N-terminus, the 425-residue chain is COBRA-like protein 4 (425 aa).

The first 27 residues, 1 to 27 (MAIGVGGCCAVLLAAALLFSSPATTYA), serve as a signal peptide directing secretion. Asn36, Asn163, Asn171, Asn319, and Asn352 each carry an N-linked (GlcNAc...) asparagine glycan.

The protein belongs to the COBRA family.

The sequence is that of COBRA-like protein 4 (BC1L9) from Oryza sativa subsp. japonica (Rice).